We begin with the raw amino-acid sequence, 112 residues long: T cell receptor alpha variable 30 (112 aa).

A signal peptide spans 1–21 (METLLKVLSGTLLWQLTWVRS). In terms of domain architecture, Ig-like spans 24–112 (PVQSPQAVIL…YSGTYFCGTE (89 aa)). Asparagine 42 is a glycosylation site (N-linked (GlcNAc...) asparagine). The cysteines at positions 43 and 109 are disulfide-linked.

Alpha-beta TR is a heterodimer composed of an alpha and beta chain; disulfide-linked. The alpha-beta TR is associated with the transmembrane signaling CD3 coreceptor proteins to form the TR-CD3 (TcR or TCR). The assembly of alpha-beta TR heterodimers with CD3 occurs in the endoplasmic reticulum where a single alpha-beta TR heterodimer associates with one CD3D-CD3E heterodimer, one CD3G-CD3E heterodimer and one CD247 homodimer forming a stable octameric structure. CD3D-CD3E and CD3G-CD3E heterodimers preferentially associate with TR alpha and TR beta chains, respectively. The association of the CD247 homodimer is the last step of TcR assembly in the endoplasmic reticulum and is required for transport to the cell surface.

The protein resides in the cell membrane. V region of the variable domain of T cell receptor (TR) alpha chain that participates in the antigen recognition. Alpha-beta T cell receptors are antigen specific receptors which are essential to the immune response and are present on the cell surface of T lymphocytes. Recognize peptide-major histocompatibility (MH) (pMH) complexes that are displayed by antigen presenting cells (APC), a prerequisite for efficient T cell adaptive immunity against pathogens. Binding of alpha-beta TR to pMH complex initiates TR-CD3 clustering on the cell surface and intracellular activation of LCK that phosphorylates the ITAM motifs of CD3G, CD3D, CD3E and CD247 enabling the recruitment of ZAP70. In turn ZAP70 phosphorylates LAT, which recruits numerous signaling molecules to form the LAT signalosome. The LAT signalosome propagates signal branching to three major signaling pathways, the calcium, the mitogen-activated protein kinase (MAPK) kinase and the nuclear factor NF-kappa-B (NF-kB) pathways, leading to the mobilization of transcription factors that are critical for gene expression and essential for T cell growth and differentiation. The T cell repertoire is generated in the thymus, by V-(D)-J rearrangement. This repertoire is then shaped by intrathymic selection events to generate a peripheral T cell pool of self-MH restricted, non-autoaggressive T cells. Post-thymic interaction of alpha-beta TR with the pMH complexes shapes TR structural and functional avidity. This chain is T cell receptor alpha variable 30, found in Homo sapiens (Human).